The chain runs to 554 residues: Intraflagellar transport protein 56 (554 aa).

The segment at 1-27 is disordered; that stretch reads MMLSRAKPAVGGESPHTDKRKKKGRKI. A compositionally biased stretch (basic residues) spans 18-27; sequence DKRKKKGRKI. 4 TPR repeats span residues 57–90, 92–125, 151–184, and 468–501; these read EDTN…ENCN, EVWV…LQNR, KEDQ…NREY, and ANDC…EGKR.

This sequence belongs to the IFT56 family. As to quaternary structure, component of the IFT complex B. Interacts with IFT46; the interaction is direct.

It is found in the cell projection. The protein localises to the cilium. Its function is as follows. Component of the intraflagellar transport (IFT) complex B required for transport of proteins in the motile cilium. Required for transport of specific ciliary cargo proteins related to motility, while it is neither required for IFT complex B assembly or motion nor for cilium assembly. Required for efficient coupling between the accumulation of GLI2 and GLI3 at the ciliary tips and their dissociation from the negative regulator SUFU. Plays a key role in maintaining the integrity of the IFT complex B and the proper ciliary localization of the IFT complex B components. Not required for IFT complex A ciliary localization or function. Essential for maintaining proper microtubule organization within the ciliary axoneme. The sequence is that of Intraflagellar transport protein 56 from Rattus norvegicus (Rat).